We begin with the raw amino-acid sequence, 242 residues long: Venom nerve growth factor 3 (242 aa).

The signal sequence occupies residues 1–18 (MSMLCYTLIIAFLIGIWA). The propeptide occupies 19–125 (APQSEDNVPL…ALNRNIQAKR (107 aa)). Positions 45–69 (HEGLKTSRNTDQRHPAPKKVDDQEP) are disordered. The span at 46–66 (EGLKTSRNTDQRHPAPKKVDD) shows a compositional bias: basic and acidic residues. Disulfide bonds link Cys-139–Cys-203, Cys-181–Cys-231, and Cys-191–Cys-233.

This sequence belongs to the NGF-beta family. As to quaternary structure, homodimer; non-covalently linked. As to expression, expressed by the venom gland.

It localises to the secreted. Its function is as follows. Nerve growth factor is important for the development and maintenance of the sympathetic and sensory nervous systems. It stimulates division and differentiation of sympathetic and embryonic sensory neurons as well as basal forebrain cholinergic neurons in the brain. Its relevance in the snake venom is not clear. However, it has been shown to inhibit metalloproteinase-dependent proteolysis of platelet glycoprotein Ib alpha, suggesting a metalloproteinase inhibition to prevent metalloprotease autodigestion and/or protection against prey proteases. Binds a lipid between the two protein chains in the homodimer. The lipid-bound form promotes histamine relase from mouse mast cells, contrary to the lipid-free form. This Pseudechis australis (Mulga snake) protein is Venom nerve growth factor 3.